The chain runs to 431 residues: Histidinol dehydrogenase (431 aa).

NAD(+)-binding residues include Y127, Q185, and N208. S234, Q256, and H259 together coordinate substrate. Q256 and H259 together coordinate Zn(2+). Catalysis depends on proton acceptor residues E323 and H324. 4 residues coordinate substrate: H324, D357, E411, and H416. Position 357 (D357) interacts with Zn(2+). A Zn(2+)-binding site is contributed by H416.

Belongs to the histidinol dehydrogenase family. It depends on Zn(2+) as a cofactor.

It catalyses the reaction L-histidinol + 2 NAD(+) + H2O = L-histidine + 2 NADH + 3 H(+). Its pathway is amino-acid biosynthesis; L-histidine biosynthesis; L-histidine from 5-phospho-alpha-D-ribose 1-diphosphate: step 9/9. Functionally, catalyzes the sequential NAD-dependent oxidations of L-histidinol to L-histidinaldehyde and then to L-histidine. The protein is Histidinol dehydrogenase of Vibrio cholerae serotype O1 (strain ATCC 39315 / El Tor Inaba N16961).